The sequence spans 1170 residues: Thrombospondin-2 (1170 aa).

The N-terminal stretch at 1-18 (MLWPLLLLALWAWPSAQA) is a signal peptide. A Laminin G-like domain is found at 19–215 (GDQDEDTAFD…LQNVYLVFEN (197 aa)). The segment at 19–232 (GDQDEDTAFD…KKGCQQSQGA (214 aa)) is heparin-binding. N-linked (GlcNAc...) asparagine glycans are attached at residues asparagine 151, asparagine 316, and asparagine 330. Positions 318–375 (SACWQDGRFFAENETWVVDSCTKCTCKKFKTVCHQISCPPATCADPWFVEGECCPSCV) constitute a VWFC domain. TSP type-1 domains lie at 379 to 429 (EEGW…GRCD), 435 to 490 (DGGW…PPCP), and 492 to 547 (DGRW…KSCP). 26 disulfides stabilise this stretch: cysteine 391/cysteine 423, cysteine 395/cysteine 428, cysteine 406/cysteine 413, cysteine 447/cysteine 484, cysteine 451/cysteine 489, cysteine 462/cysteine 474, cysteine 504/cysteine 541, cysteine 508/cysteine 546, cysteine 519/cysteine 531, cysteine 551/cysteine 562, cysteine 556/cysteine 572, cysteine 575/cysteine 586, cysteine 592/cysteine 608, cysteine 599/cysteine 617, cysteine 620/cysteine 644, cysteine 650/cysteine 663, cysteine 657/cysteine 676, cysteine 678/cysteine 689, cysteine 705/cysteine 713, cysteine 718/cysteine 738, cysteine 754/cysteine 774, cysteine 777/cysteine 797, cysteine 813/cysteine 833, cysteine 836/cysteine 856, cysteine 874/cysteine 894, and cysteine 910/cysteine 930. A glycan (N-linked (GlcNAc...) asparagine) is linked at asparagine 455. The region spanning 547–587 (PIDGCLSNPCFPGAECSSFPDGSWSCGSCPGGFLGNGTHCE) is the EGF-like 1 domain. The N-linked (GlcNAc...) asparagine glycan is linked to asparagine 582. One can recognise an EGF-like 2 domain in the interval 646–690 (PENPCKDKTHSCHRHAECIYLGHFSDPMYKCECQTGYAGDGLICG). TSP type-3 repeat units lie at residues 691-726 (EDSDLDGWPNKNLVCATNATYHCVKDNCPLLPNSGQ), 727-762 (EDFDKDGIGDACDDDDDNDGVSDEKDNCQLLFNPRQ), 763-785 (FDYDKDEVGDRCDNCPYVHNPAQ), 786-821 (IDTDNNGEGDACSVDIDGDDVFNERDNCPYVYNTDQ), 822-844 (RDTDGDGVGDHCDNCPLVHNPDQ), 845-882 (TDVDNDLVGDQCDNNEDIDEDGHQNNQDNCPHIPNANQ), 883-918 (ADHDRDGQGDACDSDDDNDGIPDDRDNCRLVANPDQ), and 919-954 (EDSDGDRRGDACKDDFDNDSIPDIDDVCPENNAISE). The N-linked (GlcNAc...) asparagine glycan is linked to asparagine 708. Residues 731-750 (KDGIGDACDDDDDNDGVSDE) are disordered. Positions 737–747 (ACDDDDDNDGV) are enriched in acidic residues. Residues 841–944 (NPDQTDVDND…DNDSIPDIDD (104 aa)) form a disordered region. 2 stretches are compositionally biased toward acidic residues: residues 845-864 (TDVDNDLVGDQCDNNEDIDE) and 894-903 (CDSDDDNDGI). The segment covering 923–933 (GDRRGDACKDD) has biased composition (basic and acidic residues). The Cell attachment site motif lies at 926 to 928 (RGD). Residues 934 to 944 (FDNDSIPDIDD) show a composition bias toward acidic residues. Residues asparagine 936 and asparagine 1067 are each glycosylated (N-linked (GlcNAc...) asparagine). Cysteines 946 and 1167 form a disulfide. A TSP C-terminal domain is found at 958–1170 (RNFQMVHLDP…SDLKYECRDV (213 aa)).

Belongs to the thrombospondin family. As to quaternary structure, homotrimer; disulfide-linked. Can bind to fibrinogen, fibronectin, laminin and type V collagen. Interacts (via the TSP type I repeats) with CD36; the interaction conveys an antiangiogenic effect. Interacts (via the TSP type I repeats) with HRG; the interaction blocks the antiangiogenic effect of THBS2 with CD36.

Its function is as follows. Adhesive glycoprotein that mediates cell-to-cell and cell-to-matrix interactions. Ligand for CD36 mediating antiangiogenic properties. The polypeptide is Thrombospondin-2 (THBS2) (Bos taurus (Bovine)).